The chain runs to 486 residues: N-succinylglutamate 5-semialdehyde dehydrogenase (486 aa).

221–226 (GSSATG) contributes to the NAD(+) binding site. Residues Glu-244 and Cys-278 contribute to the active site.

It belongs to the aldehyde dehydrogenase family. AstD subfamily.

It catalyses the reaction N-succinyl-L-glutamate 5-semialdehyde + NAD(+) + H2O = N-succinyl-L-glutamate + NADH + 2 H(+). It functions in the pathway amino-acid degradation; L-arginine degradation via AST pathway; L-glutamate and succinate from L-arginine: step 4/5. Catalyzes the NAD-dependent reduction of succinylglutamate semialdehyde into succinylglutamate. This Chromobacterium violaceum (strain ATCC 12472 / DSM 30191 / JCM 1249 / CCUG 213 / NBRC 12614 / NCIMB 9131 / NCTC 9757 / MK) protein is N-succinylglutamate 5-semialdehyde dehydrogenase.